The primary structure comprises 202 residues: Orotate phosphoribosyltransferase (202 aa).

5-phospho-alpha-D-ribose 1-diphosphate contacts are provided by residues lysine 93 and 113–121 (EDIITTGGS). The orotate site is built by threonine 117 and arginine 145.

The protein belongs to the purine/pyrimidine phosphoribosyltransferase family. PyrE subfamily. In terms of assembly, homodimer. Requires Mg(2+) as cofactor.

It catalyses the reaction orotidine 5'-phosphate + diphosphate = orotate + 5-phospho-alpha-D-ribose 1-diphosphate. The protein operates within pyrimidine metabolism; UMP biosynthesis via de novo pathway; UMP from orotate: step 1/2. Catalyzes the transfer of a ribosyl phosphate group from 5-phosphoribose 1-diphosphate to orotate, leading to the formation of orotidine monophosphate (OMP). The protein is Orotate phosphoribosyltransferase of Campylobacter concisus (strain 13826).